Reading from the N-terminus, the 160-residue chain is SsrA-binding protein (160 aa).

Belongs to the SmpB family.

The protein localises to the cytoplasm. Required for rescue of stalled ribosomes mediated by trans-translation. Binds to transfer-messenger RNA (tmRNA), required for stable association of tmRNA with ribosomes. tmRNA and SmpB together mimic tRNA shape, replacing the anticodon stem-loop with SmpB. tmRNA is encoded by the ssrA gene; the 2 termini fold to resemble tRNA(Ala) and it encodes a 'tag peptide', a short internal open reading frame. During trans-translation Ala-aminoacylated tmRNA acts like a tRNA, entering the A-site of stalled ribosomes, displacing the stalled mRNA. The ribosome then switches to translate the ORF on the tmRNA; the nascent peptide is terminated with the 'tag peptide' encoded by the tmRNA and targeted for degradation. The ribosome is freed to recommence translation, which seems to be the essential function of trans-translation. The protein is SsrA-binding protein of Escherichia coli O6:K15:H31 (strain 536 / UPEC).